The primary structure comprises 220 residues: Ribose-5-phosphate isomerase A (220 aa).

Residues 25–28, 80–83, and 93–96 contribute to the substrate site; these read TGST, DGAD, and KGGG. The Proton acceptor role is filled by E102. K120 lines the substrate pocket.

It belongs to the ribose 5-phosphate isomerase family. Homodimer.

The enzyme catalyses aldehydo-D-ribose 5-phosphate = D-ribulose 5-phosphate. It participates in carbohydrate degradation; pentose phosphate pathway; D-ribose 5-phosphate from D-ribulose 5-phosphate (non-oxidative stage): step 1/1. Catalyzes the reversible conversion of ribose-5-phosphate to ribulose 5-phosphate. This chain is Ribose-5-phosphate isomerase A, found in Bacillus cereus (strain ATCC 10987 / NRS 248).